Here is a 92-residue protein sequence, read N- to C-terminus: Acylphosphatase (92 aa).

The 87-residue stretch at 6-92 (RAHVYVSGRV…EGVDGFEIRR (87 aa)) folds into the Acylphosphatase-like domain. Active-site residues include arginine 21 and asparagine 39.

It belongs to the acylphosphatase family.

The enzyme catalyses an acyl phosphate + H2O = a carboxylate + phosphate + H(+). This is Acylphosphatase (acyP) from Natronomonas pharaonis (strain ATCC 35678 / DSM 2160 / CIP 103997 / JCM 8858 / NBRC 14720 / NCIMB 2260 / Gabara) (Halobacterium pharaonis).